Consider the following 280-residue polypeptide: Probable formate transporter (280 aa).

6 helical membrane-spanning segments follow: residues 33–49, 67–83, 116–133, 177–195, 204–219, and 253–272; these read LSFV…LLAE, LVFG…VVIA, SWVF…VLAY, FWRA…YLAV, SFGI…CIGF, and LGNI…FTYL.

It belongs to the FNT transporter (TC 1.A.16) family.

Its subcellular location is the cell membrane. In terms of biological role, may act as a formate transporter. The protein is Probable formate transporter (fdhC) of Methanobacterium formicicum.